The sequence spans 175 residues: Ribosome maturation factor RimM (175 aa).

The PRC barrel domain maps to 99–171 (AGEYYWFQLK…RILFDLPDGL (73 aa)).

The protein belongs to the RimM family. As to quaternary structure, binds ribosomal protein uS19.

The protein resides in the cytoplasm. An accessory protein needed during the final step in the assembly of 30S ribosomal subunit, possibly for assembly of the head region. Essential for efficient processing of 16S rRNA. May be needed both before and after RbfA during the maturation of 16S rRNA. It has affinity for free ribosomal 30S subunits but not for 70S ribosomes. The protein is Ribosome maturation factor RimM of Syntrophotalea carbinolica (strain DSM 2380 / NBRC 103641 / GraBd1) (Pelobacter carbinolicus).